Consider the following 341-residue polypeptide: Ribosomal RNA small subunit methyltransferase C (341 aa).

The protein belongs to the methyltransferase superfamily. RsmC family. Monomer.

The protein localises to the cytoplasm. It catalyses the reaction guanosine(1207) in 16S rRNA + S-adenosyl-L-methionine = N(2)-methylguanosine(1207) in 16S rRNA + S-adenosyl-L-homocysteine + H(+). In terms of biological role, specifically methylates the guanine in position 1207 of 16S rRNA in the 30S particle. The sequence is that of Ribosomal RNA small subunit methyltransferase C from Pseudoalteromonas translucida (strain TAC 125).